An 86-amino-acid polypeptide reads, in one-letter code: Toxin Td8 (86 aa).

A signal peptide spans 1–20 (MTRFVLFLSCFFLIGMVVEC). Residues 21-83 (KDGYLVGDDG…IWNSATNRCR (63 aa)) form the LCN-type CS-alpha/beta domain. Intrachain disulfides connect Cys31–Cys82, Cys35–Cys57, Cys43–Cys63, and Cys47–Cys65. At Arg83 the chain carries Arginine amide.

In terms of tissue distribution, expressed by the venom gland.

It is found in the secreted. Functionally, beta toxins bind voltage-independently at site-4 of sodium channels (Nav) and shift the voltage of activation toward more negative potentials thereby affecting sodium channel activation and promoting spontaneous and repetitive firing. The polypeptide is Toxin Td8 (Tityus discrepans (Venezuelan scorpion)).